A 204-amino-acid chain; its full sequence is MKRVSLLGSAAIFALVFSACGGGGEHQHGEEMMAAVPAPDAEGAAGFDEFPIGEDRDVGPLHVGGVYFQPVEMHPAPGAQPSKEEADCHIEADIHANEAGKDLGYGVGDFVPYLRVVAFLQKHGSEKVQKVMFAPMNAGDGPHYGANVKFEEGLGTYKVRFEIAAPSHDEYSLHIDEQTGVSGRFWSEPLVAEWDDFEWKGPQW.

A signal peptide spans 1–19 (MKRVSLLGSAAIFALVFSA). Cysteine 20 carries N-palmitoyl cysteine lipidation. Cysteine 20 carries S-diacylglycerol cysteine lipidation.

Belongs to the UPF0423 family.

It is found in the cell membrane. Its function is as follows. This antigen is a pathogen-specific membrane immunogen. This Treponema pallidum (strain Nichols) protein is 34 kDa membrane antigen (tpd).